The following is a 557-amino-acid chain: Dihydroxy-acid dehydratase (557 aa).

Residue Cys-50 coordinates [2Fe-2S] cluster. Asp-82 contributes to the Mg(2+) binding site. A [2Fe-2S] cluster-binding site is contributed by Cys-123. Positions 124 and 125 each coordinate Mg(2+). At Lys-125 the chain carries N6-carboxylysine. Cys-195 is a [2Fe-2S] cluster binding site. Glu-447 lines the Mg(2+) pocket. The active-site Proton acceptor is the Ser-473.

The protein belongs to the IlvD/Edd family. Homodimer. The cofactor is [2Fe-2S] cluster. Mg(2+) is required as a cofactor.

The catalysed reaction is (2R)-2,3-dihydroxy-3-methylbutanoate = 3-methyl-2-oxobutanoate + H2O. The enzyme catalyses (2R,3R)-2,3-dihydroxy-3-methylpentanoate = (S)-3-methyl-2-oxopentanoate + H2O. Its pathway is amino-acid biosynthesis; L-isoleucine biosynthesis; L-isoleucine from 2-oxobutanoate: step 3/4. It functions in the pathway amino-acid biosynthesis; L-valine biosynthesis; L-valine from pyruvate: step 3/4. Functions in the biosynthesis of branched-chain amino acids. Catalyzes the dehydration of (2R,3R)-2,3-dihydroxy-3-methylpentanoate (2,3-dihydroxy-3-methylvalerate) into 2-oxo-3-methylpentanoate (2-oxo-3-methylvalerate) and of (2R)-2,3-dihydroxy-3-methylbutanoate (2,3-dihydroxyisovalerate) into 2-oxo-3-methylbutanoate (2-oxoisovalerate), the penultimate precursor to L-isoleucine and L-valine, respectively. In Janthinobacterium sp. (strain Marseille) (Minibacterium massiliensis), this protein is Dihydroxy-acid dehydratase.